The primary structure comprises 91 residues: Small ribosomal subunit protein uS19 (91 aa).

It belongs to the universal ribosomal protein uS19 family.

Its function is as follows. Protein S19 forms a complex with S13 that binds strongly to the 16S ribosomal RNA. The polypeptide is Small ribosomal subunit protein uS19 (Prochlorococcus marinus (strain NATL1A)).